The primary structure comprises 293 residues: tRNA pseudouridine synthase B (293 aa).

Residue aspartate 39 is the Nucleophile of the active site.

The protein belongs to the pseudouridine synthase TruB family. Type 1 subfamily.

The enzyme catalyses uridine(55) in tRNA = pseudouridine(55) in tRNA. Its function is as follows. Responsible for synthesis of pseudouridine from uracil-55 in the psi GC loop of transfer RNAs. The polypeptide is tRNA pseudouridine synthase B (Streptococcus mutans serotype c (strain ATCC 700610 / UA159)).